We begin with the raw amino-acid sequence, 90 residues long: Putative defensin-like protein 243 (90 aa).

The first 19 residues, 1–19 (MKVEVIFLASCVLFSLIHA), serve as a signal peptide directing secretion. 4 disulfide bridges follow: cysteine 33/cysteine 88, cysteine 43/cysteine 72, cysteine 53/cysteine 82, and cysteine 70/cysteine 84.

This sequence belongs to the DEFL family.

Its subcellular location is the secreted. The chain is Putative defensin-like protein 243 (SCRL9) from Arabidopsis thaliana (Mouse-ear cress).